Reading from the N-terminus, the 212-residue chain is Ribosomal RNA small subunit methyltransferase G (212 aa).

S-adenosyl-L-methionine contacts are provided by residues Gly-73, Phe-78, 96-98 (ESS), 124-125 (VE), and Arg-141.

This sequence belongs to the methyltransferase superfamily. RNA methyltransferase RsmG family.

It is found in the cytoplasm. Its function is as follows. Specifically methylates the N7 position of a guanine in 16S rRNA. The chain is Ribosomal RNA small subunit methyltransferase G from Aster yellows witches'-broom phytoplasma (strain AYWB).